Consider the following 177-residue polypeptide: MSEFVTVARPYAKAAFDFAVEHQSLDRWQDMLAFAADVTRNEQISELLAGAVAPETLSRTFIAVCGEQLDEHGQNFIRVMAENGRLLVLPAVLQQFIELRALLESTVEVEVLSASALNDKQLANIAAAMEKRLSRKVKLNCKIDKSVLAGVIIRAGDMVIDGSVRGRLERLTDVLQS.

Belongs to the ATPase delta chain family. As to quaternary structure, F-type ATPases have 2 components, F(1) - the catalytic core - and F(0) - the membrane proton channel. F(1) has five subunits: alpha(3), beta(3), gamma(1), delta(1), epsilon(1). F(0) has three main subunits: a(1), b(2) and c(10-14). The alpha and beta chains form an alternating ring which encloses part of the gamma chain. F(1) is attached to F(0) by a central stalk formed by the gamma and epsilon chains, while a peripheral stalk is formed by the delta and b chains.

The protein resides in the cell inner membrane. Its function is as follows. F(1)F(0) ATP synthase produces ATP from ADP in the presence of a proton or sodium gradient. F-type ATPases consist of two structural domains, F(1) containing the extramembraneous catalytic core and F(0) containing the membrane proton channel, linked together by a central stalk and a peripheral stalk. During catalysis, ATP synthesis in the catalytic domain of F(1) is coupled via a rotary mechanism of the central stalk subunits to proton translocation. In terms of biological role, this protein is part of the stalk that links CF(0) to CF(1). It either transmits conformational changes from CF(0) to CF(1) or is implicated in proton conduction. The sequence is that of ATP synthase subunit delta from Serratia proteamaculans (strain 568).